The following is a 231-amino-acid chain: L-ribulose-5-phosphate 4-epimerase AraD (231 aa).

Substrate is bound by residues 27 to 28 (GN), 44 to 45 (SG), and 74 to 75 (SS). Residues D76, H95, and H97 each coordinate Zn(2+). The active-site Proton donor/acceptor is D120. H171 contributes to the Zn(2+) binding site. The Proton donor/acceptor role is filled by Y229.

Belongs to the aldolase class II family. AraD/FucA subfamily. As to quaternary structure, homotetramer. Requires Zn(2+) as cofactor.

It carries out the reaction L-ribulose 5-phosphate = D-xylulose 5-phosphate. The protein operates within carbohydrate degradation; L-arabinose degradation via L-ribulose; D-xylulose 5-phosphate from L-arabinose (bacterial route): step 3/3. Inhibited by glycolohydroxamate at concentration above 0.1 mM. In terms of biological role, involved in the degradation of L-arabinose. Catalyzes the interconversion of L-ribulose 5-phosphate (LRu5P) and D-xylulose 5-phosphate (D-Xu5P) via a retroaldol/aldol mechanism (carbon-carbon bond cleavage analogous to a class II aldolase reaction). This is L-ribulose-5-phosphate 4-epimerase AraD from Escherichia coli (strain K12).